The sequence spans 161 residues: Nucleotide-binding protein Shew185_3601 (161 aa).

The protein belongs to the YajQ family.

In terms of biological role, nucleotide-binding protein. The polypeptide is Nucleotide-binding protein Shew185_3601 (Shewanella baltica (strain OS185)).